We begin with the raw amino-acid sequence, 321 residues long: MQNRNKNNWMKKWVIRSISILIILNIIAWPSISYAYPIFAQQSYENPREATGRIVCANCHLAKKPVDIEVPQSVFPNTVFEAVVKIPYDKQIKQVLGNGKKGGINVGAVLILPEGFELAPYNRIPAEMKDKIGDLALFQNYRPDKRNIIVIGPVPGKAYSEIVFPLISPDPATNKEVHFLKYPIYLGGNRGRGQIYPDGSKSNNTIYNASIAGKVTKILRREKGGYEITIEDTLEGRRVVDIVPPGPELIISEGEFIKIDQPLTNNPNLGGFGQGDTEIVLQNPLRIQGLLLFFVSVIMAQILLVLKKKQFEKVQLAEMNL.

Residues 1 to 35 (MQNRNKNNWMKKWVIRSISILIILNIIAWPSISYA) form the signal peptide. Tyr36, Cys56, Cys59, and His60 together coordinate heme. The chain crosses the membrane as a helical span at residues 287–306 (IQGLLLFFVSVIMAQILLVL).

This sequence belongs to the cytochrome f family. The 4 large subunits of the cytochrome b6-f complex are cytochrome b6, subunit IV (17 kDa polypeptide, petD), cytochrome f and the Rieske protein, while the 4 small subunits are PetG, PetL, PetM and PetN. The complex functions as a dimer. It depends on heme as a cofactor.

The protein localises to the plastid. It is found in the chloroplast thylakoid membrane. Its function is as follows. Component of the cytochrome b6-f complex, which mediates electron transfer between photosystem II (PSII) and photosystem I (PSI), cyclic electron flow around PSI, and state transitions. The protein is Cytochrome f of Psilotum nudum (Whisk fern).